The primary structure comprises 469 residues: 3-isopropylmalate dehydratase large subunit (469 aa).

The [4Fe-4S] cluster site is built by C348, C409, and C412.

It belongs to the aconitase/IPM isomerase family. LeuC type 1 subfamily. As to quaternary structure, heterodimer of LeuC and LeuD. [4Fe-4S] cluster is required as a cofactor.

The catalysed reaction is (2R,3S)-3-isopropylmalate = (2S)-2-isopropylmalate. Its pathway is amino-acid biosynthesis; L-leucine biosynthesis; L-leucine from 3-methyl-2-oxobutanoate: step 2/4. Its function is as follows. Catalyzes the isomerization between 2-isopropylmalate and 3-isopropylmalate, via the formation of 2-isopropylmaleate. This chain is 3-isopropylmalate dehydratase large subunit, found in Nitrosococcus oceani (strain ATCC 19707 / BCRC 17464 / JCM 30415 / NCIMB 11848 / C-107).